The following is a 221-amino-acid chain: Late embryogenesis abundant protein, group 3 (221 aa).

Positions 1 to 221 (MASHQDKASY…KDSSTITRDH (221 aa)) are disordered. Over residues 33 to 42 (TAQHAKDRAA) the composition is skewed to basic and acidic residues. Low complexity predominate over residues 43–52 (DAAGHAAGKG). Basic and acidic residues-rich tracts occupy residues 53 to 63 (QDAKEATKQKA) and 72 to 147 (KKTD…KQKA). A compositionally biased stretch (polar residues) spans 212–221 (KDSSTITRDH).

This sequence belongs to the LEA type 4 family.

This is Late embryogenesis abundant protein, group 3 (MGL3) from Zea mays (Maize).